Consider the following 181-residue polypeptide: Bifunctional protein PyrR (181 aa).

Substrate contacts are provided by residues 39-40 (RR), 104-112 (DDVLYTGRT), Arg-137, and Val-161. Residues 100 to 112 (VILVDDVLYTGRT) carry the PRPP-binding motif.

It belongs to the purine/pyrimidine phosphoribosyltransferase family. PyrR subfamily.

It catalyses the reaction UMP + diphosphate = 5-phospho-alpha-D-ribose 1-diphosphate + uracil. Its function is as follows. Regulates the transcription of the pyrimidine nucleotide (pyr) operon in response to exogenous pyrimidines. Also displays a weak uracil phosphoribosyltransferase activity which is not physiologically significant. This chain is Bifunctional protein PyrR, found in Pasteurella multocida (strain Pm70).